The sequence spans 81 residues: RNA-binding protein Hfq (81 aa).

A Sm domain is found at 10–70 (DLFLNSVRKS…ISTIMPSQPV (61 aa)).

The protein belongs to the Hfq family. Homohexamer.

In terms of biological role, RNA chaperone that binds small regulatory RNA (sRNAs) and mRNAs to facilitate mRNA translational regulation in response to envelope stress, environmental stress and changes in metabolite concentrations. Also binds with high specificity to tRNAs. The sequence is that of RNA-binding protein Hfq from Mesorhizobium japonicum (strain LMG 29417 / CECT 9101 / MAFF 303099) (Mesorhizobium loti (strain MAFF 303099)).